The primary structure comprises 239 residues: Uridylate kinase (239 aa).

12–15 serves as a coordination point for ATP; that stretch reads KLSG. Residues 21-26 are involved in allosteric activation by GTP; that stretch reads GEQGFG. Glycine 55 serves as a coordination point for UMP. Residues glycine 56 and arginine 60 each coordinate ATP. Residues aspartate 75 and 136–143 contribute to the UMP site; that span reads TGNPYFST. 3 residues coordinate ATP: threonine 163, tyrosine 169, and aspartate 172.

This sequence belongs to the UMP kinase family. Homohexamer.

It localises to the cytoplasm. It carries out the reaction UMP + ATP = UDP + ADP. Its pathway is pyrimidine metabolism; CTP biosynthesis via de novo pathway; UDP from UMP (UMPK route): step 1/1. Its activity is regulated as follows. Allosterically activated by GTP. Inhibited by UTP. Functionally, catalyzes the reversible phosphorylation of UMP to UDP. This chain is Uridylate kinase, found in Koribacter versatilis (strain Ellin345).